A 321-amino-acid polypeptide reads, in one-letter code: MNSKLEQLKTMTTVVADTGDIDAIRHWRPEDATTNPSLLLKAAASEAYRPMLEKAVAHAAQHGGSDAEQLTVATDMLAVLAGKEILGLIPGVVSTEVDARLSFDTSATLERARRLVDFYDRQGVDTNRVLIKIASTWEGIRAAEQLEKEGIRCNLTLLFSFVQAVACAQAGVHLISPFVGRILDWHLASSGRDSYPAEEDPGVFSVSRIYNYYKANGFNTVVMGASFRNTGEIEMLAGCDRLTISPALLQDLKDDQGTLARKLNPETASSPDKPGQINEKQFRWESNEDAMATEKLADGIRRFAADQIELEHRVRQLAQAA.

Lys132 serves as the catalytic Schiff-base intermediate with substrate.

This sequence belongs to the transaldolase family. Type 1 subfamily. Homodimer.

Its subcellular location is the cytoplasm. It catalyses the reaction D-sedoheptulose 7-phosphate + D-glyceraldehyde 3-phosphate = D-erythrose 4-phosphate + beta-D-fructose 6-phosphate. It participates in carbohydrate degradation; pentose phosphate pathway; D-glyceraldehyde 3-phosphate and beta-D-fructose 6-phosphate from D-ribose 5-phosphate and D-xylulose 5-phosphate (non-oxidative stage): step 2/3. In terms of biological role, transaldolase is important for the balance of metabolites in the pentose-phosphate pathway. This is Transaldolase from Marinobacter nauticus (strain ATCC 700491 / DSM 11845 / VT8) (Marinobacter aquaeolei).